The primary structure comprises 532 residues: Chromobox protein homolog 2 (532 aa).

Positions 1–66 (MEELSSVGEQ…AFQKKEHEKE (66 aa)) are involved in the interaction with H3C15 and H3C1. The region spanning 12–70 (FAAECILSKRLRKGKLEYLVKWRGWSSKHNSWEPEENILDPRLLLAFQKKEHEKEVQNR) is the Chromo domain. Residues 60–69 (KKEHEKEVQN) are compositionally biased toward basic and acidic residues. The disordered stretch occupies residues 60-204 (KKEHEKEVQN…APASKLPPPL (145 aa)). Positions 70 to 82 (RKRGKRPRGRPRK) are enriched in basic residues. A DNA-binding region (a.T hook) is located at residues 75 to 87 (RPRGRPRKLTAMS). Positions 103 to 119 (KSKSSSSSSSSTSSSSS) are enriched in low complexity. Over residues 128–140 (LDAKRGPRGRETH) the composition is skewed to basic and acidic residues. Residues Lys146 and Lys153 each participate in a glycyl lysine isopeptide (Lys-Gly) (interchain with G-Cter in SUMO2) cross-link. The Nuclear localization signal signature appears at 163–168 (KRGRKP). At Arg247 the chain carries Asymmetric dimethylarginine; alternate. Position 247 is an omega-N-methylarginine; alternate (Arg247). Disordered regions lie at residues 296-348 (KGEL…PAPT) and 379-493 (KGVP…SQDW). A Phosphoserine modification is found at Ser302. The span at 464–478 (SSSSDSDPDSASPPS) shows a compositional bias: low complexity. The segment covering 479–493 (TGQNPSVSVQTSQDW) has biased composition (polar residues).

As to quaternary structure, component of a PRC1-like complex. The composition of the PRC1 complex may differ between the PRC1 complex in pluripotent embryonic stem cells containing RNF2, CBX7 and PCGF2, and the PRC1 complex in differentiating cells containing RNF2, CBX2, CBX4 and BMI1. May interact with H3C15, H3C1 and RNF2. Interacts (via chromodomain) with histone H3K9Me3 and H3K27me3.

Its subcellular location is the nucleus. The protein localises to the chromosome. Its function is as follows. Component of a Polycomb group (PcG) multiprotein PRC1-like complex, a complex class required to maintain the transcriptionally repressive state of many genes, including Hox genes, throughout development. PcG PRC1 complex acts via chromatin remodeling and modification of histones; it mediates monoubiquitination of histone H2A 'Lys-119', rendering chromatin heritably changed in its expressibility. Binds to histone H3 trimethylated at 'Lys-9' (H3K9me3) or at 'Lys-27' (H3K27me3). Plays a role in the lineage differentiation of the germ layers in embryonic development. Involved in sexual development, acting as activator of NR5A1 expression. The polypeptide is Chromobox protein homolog 2 (CBX2) (Homo sapiens (Human)).